The chain runs to 433 residues: Chaperone SurA (433 aa).

An N-terminal signal peptide occupies residues 1–20 (MKNWRTLIFGLMFSVSTAFA). PpiC domains are found at residues 171–272 (DTEL…KVND) and 282–382 (VTEV…QLLD).

Its subcellular location is the periplasm. The enzyme catalyses [protein]-peptidylproline (omega=180) = [protein]-peptidylproline (omega=0). Chaperone involved in the correct folding and assembly of outer membrane proteins. Recognizes specific patterns of aromatic residues and the orientation of their side chains, which are found more frequently in integral outer membrane proteins. May act in both early periplasmic and late outer membrane-associated steps of protein maturation. The polypeptide is Chaperone SurA (Photorhabdus laumondii subsp. laumondii (strain DSM 15139 / CIP 105565 / TT01) (Photorhabdus luminescens subsp. laumondii)).